The sequence spans 292 residues: 2-(5''-triphosphoribosyl)-3'-dephosphocoenzyme-A synthase (292 aa).

It belongs to the CitG/MdcB family.

The enzyme catalyses 3'-dephospho-CoA + ATP = 2'-(5''-triphospho-alpha-D-ribosyl)-3'-dephospho-CoA + adenine. Its function is as follows. Catalyzes the formation of 2-(5''-triphosphoribosyl)-3'-dephosphocoenzyme-A, the precursor of the prosthetic group of the holo-acyl carrier protein (gamma chain) of citrate lyase, from ATP and dephospho-CoA. The sequence is that of 2-(5''-triphosphoribosyl)-3'-dephosphocoenzyme-A synthase from Escherichia coli (strain ATCC 8739 / DSM 1576 / NBRC 3972 / NCIMB 8545 / WDCM 00012 / Crooks).